The following is a 158-amino-acid chain: 6,7-dimethyl-8-ribityllumazine synthase (158 aa).

Residues Phe-18, 50-52 (SYD), and 74-76 (AVI) each bind 5-amino-6-(D-ribitylamino)uracil. 79 to 80 (ET) lines the (2S)-2-hydroxy-3-oxobutyl phosphate pocket. The active-site Proton donor is His-82. Leu-107 contacts 5-amino-6-(D-ribitylamino)uracil. A (2S)-2-hydroxy-3-oxobutyl phosphate-binding site is contributed by Arg-122.

This sequence belongs to the DMRL synthase family.

The enzyme catalyses (2S)-2-hydroxy-3-oxobutyl phosphate + 5-amino-6-(D-ribitylamino)uracil = 6,7-dimethyl-8-(1-D-ribityl)lumazine + phosphate + 2 H2O + H(+). It functions in the pathway cofactor biosynthesis; riboflavin biosynthesis; riboflavin from 2-hydroxy-3-oxobutyl phosphate and 5-amino-6-(D-ribitylamino)uracil: step 1/2. Its function is as follows. Catalyzes the formation of 6,7-dimethyl-8-ribityllumazine by condensation of 5-amino-6-(D-ribitylamino)uracil with 3,4-dihydroxy-2-butanone 4-phosphate. This is the penultimate step in the biosynthesis of riboflavin. The protein is 6,7-dimethyl-8-ribityllumazine synthase of Sulfolobus acidocaldarius (strain ATCC 33909 / DSM 639 / JCM 8929 / NBRC 15157 / NCIMB 11770).